A 67-amino-acid polypeptide reads, in one-letter code: uncharacterized protein (67 aa).

It belongs to the baculoviridae 8 kDa protein family.

This is an uncharacterized protein from Autographa californica nuclear polyhedrosis virus (AcMNPV).